Consider the following 517-residue polypeptide: ATP synthase subunit alpha (517 aa).

Position 174–181 (174–181 (GDRQTGKT)) interacts with ATP.

This sequence belongs to the ATPase alpha/beta chains family. F-type ATPases have 2 components, CF(1) - the catalytic core - and CF(0) - the membrane proton channel. CF(1) has five subunits: alpha(3), beta(3), gamma(1), delta(1), epsilon(1). CF(0) has three main subunits: a(1), b(2) and c(9-12). The alpha and beta chains form an alternating ring which encloses part of the gamma chain. CF(1) is attached to CF(0) by a central stalk formed by the gamma and epsilon chains, while a peripheral stalk is formed by the delta and b chains.

The protein localises to the cell inner membrane. The enzyme catalyses ATP + H2O + 4 H(+)(in) = ADP + phosphate + 5 H(+)(out). In terms of biological role, produces ATP from ADP in the presence of a proton gradient across the membrane. The alpha chain is a regulatory subunit. This chain is ATP synthase subunit alpha, found in Polaromonas sp. (strain JS666 / ATCC BAA-500).